Here is a 579-residue protein sequence, read N- to C-terminus: Nuclear receptor coactivator 5 (579 aa).

Met1 is subject to N-acetylmethionine. Residues 1 to 78 (MNTAPSRPSP…LRDHRDSRSV (78 aa)) form a disordered region. Residues 1–158 (MNTAPSRPSP…RDSFDGRGPP (158 aa)) form a transcription repression region. A Phosphothreonine modification is found at Thr3. Phosphoserine occurs at positions 9, 21, 24, 29, and 34. 2 stretches are compositionally biased toward basic and acidic residues: residues 11-62 (TRRD…DLRD) and 68-78 (DLRDHRDSRSV). Residues Ser96, Ser116, Ser126, Ser143, and Ser151 each carry the phosphoserine modification. A disordered region spans residues 148–173 (YRDSFDGRGPPGPESQSRAKERLKRE). A compositionally biased stretch (basic and acidic residues) spans 164–173 (SRAKERLKRE). Thr274 is modified (phosphothreonine). The short motif at 345–349 (LINLL) is the LXXLL motif element. Disordered stretches follow at residues 375-428 (MRSS…PTSQ), 444-537 (VTAN…NFDN), and 560-579 (QTTAQMGQPQAPMGSYQRHY). Ser378 bears the Phosphoserine mark. The residue at position 379 (Thr379) is a Phosphothreonine. Ser381 bears the Phosphoserine mark. Positions 395 to 413 (SGASLKTQPSSQPLQSGQV) are enriched in polar residues. Residues 446–457 (ANSSSASPSVAA) are compositionally biased toward low complexity. Residues 458 to 579 (GNTPNQNFST…APMGSYQRHY (122 aa)) form a transcription activation region. Composition is skewed to polar residues over residues 459–485 (NTPNQNFSTAANSQPQQRSQASGNQPP) and 520–537 (SNMTSQRPVSSTGINFDN).

In terms of assembly, binds HTATIP2/TIP30. Interacts with YLPM1. Forms a complex with ILF2, ILF3, YLPM1, KHDRBS1, RBMX and PPP1CA. In terms of tissue distribution, widely expressed.

The protein resides in the nucleus. Nuclear receptor coregulator that can have both coactivator and corepressor functions. Interacts with nuclear receptors for steroids (ESR1 and ESR2) independently of the steroid binding domain (AF-2) of the ESR receptors, and with the orphan nuclear receptor NR1D2. Involved in the coactivation of nuclear steroid receptors (ER) as well as the corepression of MYC in response to 17-beta-estradiol (E2). This is Nuclear receptor coactivator 5 (NCOA5) from Homo sapiens (Human).